Reading from the N-terminus, the 321-residue chain is Iron(3+)-hydroxamate-binding protein YxeB (321 aa).

Positions 1–20 (MKKNILLVGMLVLLLMFVSA) are cleaved as a signal peptide. Cysteine 21 is lipidated: N-palmitoyl cysteine. The S-diacylglycerol cysteine moiety is linked to residue cysteine 21. The segment covering 24–33 (TASKGSSSDS) has biased composition (low complexity). Residues 24–48 (TASKGSSSDSASEKTEMRTYKSPKG) form a disordered region. A Fe/B12 periplasmic-binding domain is found at 58 to 316 (RIVTDFYAGE…IITDMLIKRA (259 aa)).

The protein belongs to the bacterial solute-binding protein 8 family. The complex is composed of an ATP-binding protein (FhuC), two transmembrane proteins (FhuB and FhuG) and a solute-binding protein (FhuD or YxeB).

Its subcellular location is the cell membrane. The protein localises to the membrane raft. Functionally, part of the ABC transporter complex FhuCBGD involved in iron(3+)-hydroxamate import. Binds the iron(3+)-hydroxamate complex and transfers it to the membrane-bound permease. Partially required for the transport of desferrioxamine. This is Iron(3+)-hydroxamate-binding protein YxeB (yxeB) from Bacillus subtilis (strain 168).